The chain runs to 348 residues: Probable dual-specificity RNA methyltransferase RlmN (348 aa).

Catalysis depends on glutamate 93, which acts as the Proton acceptor. In terms of domain architecture, Radical SAM core spans 99–333; it reads TEKRLTACLS…VSLRKSRGLD (235 aa). Cysteine 106 and cysteine 338 are disulfide-bonded. The [4Fe-4S] cluster site is built by cysteine 113, cysteine 117, and cysteine 120. S-adenosyl-L-methionine is bound by residues 160–161, serine 190, 219–221, and asparagine 295; these read GE and SLH. Cysteine 338 acts as the S-methylcysteine intermediate in catalysis.

It belongs to the radical SAM superfamily. RlmN family. [4Fe-4S] cluster is required as a cofactor.

It is found in the cytoplasm. The enzyme catalyses adenosine(2503) in 23S rRNA + 2 reduced [2Fe-2S]-[ferredoxin] + 2 S-adenosyl-L-methionine = 2-methyladenosine(2503) in 23S rRNA + 5'-deoxyadenosine + L-methionine + 2 oxidized [2Fe-2S]-[ferredoxin] + S-adenosyl-L-homocysteine. It carries out the reaction adenosine(37) in tRNA + 2 reduced [2Fe-2S]-[ferredoxin] + 2 S-adenosyl-L-methionine = 2-methyladenosine(37) in tRNA + 5'-deoxyadenosine + L-methionine + 2 oxidized [2Fe-2S]-[ferredoxin] + S-adenosyl-L-homocysteine. Its function is as follows. Specifically methylates position 2 of adenine 2503 in 23S rRNA and position 2 of adenine 37 in tRNAs. In Prochlorococcus marinus (strain MIT 9215), this protein is Probable dual-specificity RNA methyltransferase RlmN.